Here is a 388-residue protein sequence, read N- to C-terminus: Succinate--CoA ligase [ADP-forming] subunit beta (388 aa).

The 236-residue stretch at lysine 9–glutamate 244 folds into the ATP-grasp domain. ATP contacts are provided by residues lysine 46, glycine 53–glycine 55, glutamate 99, leucine 102, and glutamate 107. The Mg(2+) site is built by asparagine 199 and aspartate 213. Substrate contacts are provided by residues asparagine 265 and glycine 322–leucine 324.

This sequence belongs to the succinate/malate CoA ligase beta subunit family. In terms of assembly, heterotetramer of two alpha and two beta subunits. Mg(2+) serves as cofactor.

It catalyses the reaction succinate + ATP + CoA = succinyl-CoA + ADP + phosphate. The catalysed reaction is GTP + succinate + CoA = succinyl-CoA + GDP + phosphate. Its pathway is carbohydrate metabolism; tricarboxylic acid cycle; succinate from succinyl-CoA (ligase route): step 1/1. Its function is as follows. Succinyl-CoA synthetase functions in the citric acid cycle (TCA), coupling the hydrolysis of succinyl-CoA to the synthesis of either ATP or GTP and thus represents the only step of substrate-level phosphorylation in the TCA. The beta subunit provides nucleotide specificity of the enzyme and binds the substrate succinate, while the binding sites for coenzyme A and phosphate are found in the alpha subunit. The chain is Succinate--CoA ligase [ADP-forming] subunit beta from Syntrophobacter fumaroxidans (strain DSM 10017 / MPOB).